The sequence spans 470 residues: Calmodulin-binding receptor-like cytoplasmic kinase 1 (470 aa).

Disordered regions lie at residues 1–29 (MPMR…SWTD) and 65–128 (PTEC…SKSW). A compositionally biased stretch (basic and acidic residues) spans 65–82 (PTECRSDPGESSTHDRES). Polar residues-rich tracts occupy residues 83–98 (TLSG…SFGR) and 108–121 (YRFS…PGKD). The region spanning 147–423 (FSSVHQIGEG…MKGIAEKLWA (277 aa)) is the Protein kinase domain. ATP is bound by residues 153 to 161 (IGEGGFGTV) and K175. The interval 162-185 (FKGKLDDGTIVAIKRARKNNYGKS) is caM-binding. D273 functions as the Proton acceptor in the catalytic mechanism. Residues S277 and S308 each carry the phosphoserine modification. A Phosphothreonine modification is found at T309. Y322 carries the post-translational modification Phosphotyrosine.

This sequence belongs to the protein kinase superfamily. Ser/Thr protein kinase family. Interacts with calmodulin (CaM) in a Ca(2+)-dependent manner. The cofactor is Mg(2+). In terms of processing, autophosphorylated.

The protein resides in the cytoplasm. It carries out the reaction L-seryl-[protein] + ATP = O-phospho-L-seryl-[protein] + ADP + H(+). The enzyme catalyses L-threonyl-[protein] + ATP = O-phospho-L-threonyl-[protein] + ADP + H(+). Up-regulated by Ca(2+)/CaM. The polypeptide is Calmodulin-binding receptor-like cytoplasmic kinase 1 (CRCK1) (Arabidopsis thaliana (Mouse-ear cress)).